A 250-amino-acid chain; its full sequence is Lectin 1 (250 aa).

An N-linked (GlcNAc...) asparagine; partial glycan is attached at Asn119. 2 residues coordinate Mn(2+): Glu128 and Asp130. Ca(2+) contacts are provided by Asp130, Tyr132, Asn138, and Asp141. Mn(2+) is bound by residues Asp141 and His146.

It belongs to the leguminous lectin family.

In terms of biological role, di-N-acetylchitobiose specific lectin. This chain is Lectin 1, found in Laburnum alpinum (Scotch laburnum).